The sequence spans 87 residues: Defensin-like protein 100 (87 aa).

A signal peptide spans 1-29 (MRSLRLRTVVVATIVVCLSVLLSPTEVDG). 4 disulfides stabilise this stretch: cysteine 31–cysteine 79, cysteine 38–cysteine 64, cysteine 44–cysteine 76, and cysteine 48–cysteine 78.

This sequence belongs to the DEFL family.

The protein resides in the secreted. The protein is Defensin-like protein 100 of Arabidopsis thaliana (Mouse-ear cress).